Reading from the N-terminus, the 742-residue chain is MPCCSHRSCREDPGTSESREMDPVAFEDVAVNFTQEEWTLLDISQKNLFREVMLETFRNLTSIGKKWSDQNIEYEYQNPRRSFRSLIEEKVNEIKEDSHCGETFTQVPDDRLNFQEKKASPEVKSCDSFVCAEVGIGNSSFNMSIRGDTGHKAYEYQEYGPKPYKCQQPKNKKAFRYRPSIRTQERDHTGEKPYACKVCGKTFIFHSSIRRHMVMHSGDGTYKCKFCGKAFHSFSLYLIHERTHTGEKPYECKQCGKSFTYSATLQIHERTHTGEKPYECSKCDKAFHSSSSYHRHERSHMGEKPYQCKECGKAFAYTSSLRRHERTHSGKKPYECKQYGEGLSYLISFQTHIRMNSGERPYKCKICGKGFYSAKSFQTHEKTHTGEKRYKCKQCGKAFNLSSSFRYHERIHTGEKPYECKQCGKAFRSASQLRVHGGTHTGEKPYECKECGKAFRSTSHLRVHGRTHTGEKPYECKECGKAFRYVKHLQIHERTEKHIRMPSGERPYKCSICEKGFYSAKSFQTHEKTHTGEKPYECNQCGKAFRCCNSLRYHERTHTGEKPYECKQCGKAFRSASHLRMHERTHTGEKPYECKQCGKAFSCASNLRKHGRTHTGEKPYECKQCGKAFRSASNLQMHERTHTGEKPYECKECEKAFCKFSSFQIHERKHRGEKPYECKHCGNGFTSAKILQIHARTHIGEKHYECKECGKAFNYFSSLHIHARTHMGEKPYECKDCGKAFS.

A disordered region spans residues 1–20 (MPCCSHRSCREDPGTSESRE). Residues 8–20 (SCREDPGTSESRE) are compositionally biased toward basic and acidic residues. The KRAB domain occupies 24-104 (VAFEDVAVNF…KEDSHCGETF (81 aa)). 9 consecutive C2H2-type zinc fingers follow at residues 194–216 (YACK…MVMH), 222–244 (YKCK…ERTH), 250–272 (YECK…ERTH), 278–300 (YECS…ERSH), 306–328 (YQCK…ERTH), 362–384 (YKCK…EKTH), 390–412 (YKCK…ERIH), 418–440 (YECK…GGTH), and 446–468 (YECK…GRTH). The C2H2-type 10; degenerate zinc finger occupies 474 to 502 (YECKECGKAFRYVKHLQIHERTEKHIRMP). C2H2-type zinc fingers lie at residues 508–530 (YKCS…EKTH), 536–558 (YECN…ERTH), 564–586 (YECK…ERTH), 592–614 (YECK…GRTH), 620–642 (YECK…ERTH), 648–670 (YECK…ERKH), 676–698 (YECK…ARTH), and 704–726 (YECK…ARTH).

The protein belongs to the krueppel C2H2-type zinc-finger protein family.

It is found in the nucleus. Functionally, may be involved in transcriptional regulation. This Homo sapiens (Human) protein is Zinc finger protein 700 (ZNF700).